Reading from the N-terminus, the 1249-residue chain is MEEVITIAQIVHRGTDILSLNNEEIEALVDEIRSTLKGSNDIKNIRLIDFLFTLKDFVNHVRAEQSKLPNLSMPMEAYIRQLLVNPDVIPIVSEKKKELRVRPSTRKEIFLINGTHLAVPAEVPIEIYGLKLRLKTFSPQCFMRMAEIGSFLPETLGYVASGANLTNFIRVFMKCVDQETWKKNGEGIVVTTKENIIQFTHQYIELYKFLRSGGHSWLINRLAEEMVHRKLDREDQGSHISSVIETEEIEPEENIKRVIFFLKELSTMYSVFPVFTSGYMPLLYDLYRAGYLEVLWNPVEQKFLQHAEQREKEQMILQQVDMKLTEVTTQARQYFKIMEEKIGRVQSDAIREILTMEGKVDDPNSILQEVIKACGKQEAELITTEYLNIKKQWELQEKNACAHLKLVKQLRSGLQYAESLKVLESIRVLYKEKNNTTNWNLCKACGFKLLCPHVDMLIQLQAAEASYDTMRTKLMKFSGINKEKENNQGLIYSYFCKICGEELAHFVQEDRTADVGVIGDLNSKLRIFIWQETMKACTFIHFGKLVDVKQFANIAVNVCLPLIYNIENIKKEEDYDPLTQLYAVIYIYAYILNLIYSSQKNKEFLTITIHGMKADSSLNAYVTFLLEKMTQQYSGIINQLSEITDQWIANNFREAFKKIIHQNGLQGLSVQDDTKVLLTEILLDPLYDYAATVARIDGSIPMHKPQTPKEAEYEFKTVIGRTPTELLSQKEFYDKIYTFKYRPDFTQLARLNDIYFQEESLRVWWGGRDEEKISTLIYLKAYELFLKYLQNAPNFNLELAEFKKYENAYGEQRALLAQQGFYNIFDPNTGRADQRTRLFEYKKLPISTLYDEKGLPHKWTIYVYKAIDSSQKPAEIEVSRKDVIKKIDNHYALADLRCSVCHVLQHEVGQLNIKKVQTALKASLEFNTFYAFYESRCPKGGLHDFQDKKCVKCGLFTYIIYDHLSQPELVHDYYNNYKDQYDKEKMSIHSIQMKKDIAVPSAETQPEPQQEPWTFDYGKIIKTAKILDISPAVIEAIGAMEGRSYADIKEGQGAPPPPTSMDDPRLMAVDSAVRIFLYNYNCLRHISTFNKPPMYIERLVKHLSYEEKEDLEKVLPNVVNEYHTTFKQLRVTDPASALLYSIEFLCISFLTLYEIKEPSWVVNIIREFALTELNTIIQSEKLLSKPGAFNFMIFGEDFVCSGEDSSMDDISAYSSPGLFGEDIIDQLDDPFSIEDVDISLDVLDNLAPQ.

It belongs to the asfivirus M1249L family. As to quaternary structure, interacts with the minor capsid protein p17 and with the hexon capsid protein p72 capsomers; these interactions form a rigid zipper structure that stabilizes the capsomers. Interacts with host IRF3.

The protein localises to the virion. It localises to the host cytoplasm. Its function is as follows. Together with the penton and the other minor capsid proteins (p17, p49), forms a complicated network immediately below the outer capsid shell, stabilizing the whole capsid. In addition, blocks IFN-beta transactivation mediated by the cGAS-STING pathway and regulates the transcriptional activity of IFN-beta. Mechanistically, suppresses the phosphorylation of host key adapter protein TBK1 and degrades host IRF3 in the cytoplasm. This African swine fever virus (isolate Tick/Malawi/Lil 20-1/1983) (ASFV) protein is Minor capsid protein M1249L.